The primary structure comprises 926 residues: MTARFRLPAGRTYNVRASELARDRQHTEVVCNILLLDNTVQAFRVNKHDQGQVLLDIVFKHLDLTERDYFGLQLADDSTDNPRWLDPNKPIRKQLKRGSPYNLNFRVKFFVSDPNKLQEEYTRYQYFLQIKQDILTGRLSCPCNTAALLASFAVQSELGDYNQSENLAGYLSDYSFIPNQPQDFEKEIAKLHQQHVGLSPAEAEFNYLNAARTLELYGVEFHYARDQSNNEILIGVMSGGILIYKNRVRMNTFLWLKIVKISFKCKQFFIQLRKELHESRETLLGFNMVNYRACKTLWKACVEHHTFFRLDRPLPPQKNFFAHYFTLGSKFRYCGRTEVQSVQYGKEKANKDRVFARSPSKPLARKLMDWEVVSRNSLSDDRLETQSLPSRSPPGTPNHRNSSFTQEATRVRPSSVGHLVDHVVHMSPSEDFVSQRSPSSTQANSIVLESSPSQETPEDGQPPALPPKQSKKNSWNQIHFSNSQQDLVTHTNESFDVPSSPEKSTPNGGIPHDNLVLIKMKPDENGRFGFNVKGGYDQKMPVIVSRVAPGTPADLCVPRLNEGDQVVLINGRDIAEHTHDQVVLFIKASCEKHSGELVLLVRPNAVYDVVEEKLESEPDFQYIPEKAPLDSVHQDDHSLRESMIQLAEGLITGTVLAQFDQLYRKKPGMTMSCAKLPQNISKNRYRDISPYDATRVLLKGNEDYINANYINMEIPSSSIINQYIACQGPLPHTCKDFWQMTWEQGSSMVVMLTTQVERGRVKCHQYWPEPSESSSYGCYQVTCHSEEGNPAYIFRKMTLFNQEKNESRQLTQIQYTAWPDHGVPDDSSDFLDFVCHVRDQRAGKEEPIIVHCSAGIGRTGVLITMETAMCLIECNQPVYPLDIVRTMRDQRAMMIQTPSQYRFVCEAILKVYEEGFVKPLTTSSNK.

Residues 29–312 form the FERM domain; the sequence is VVCNILLLDN…EHHTFFRLDR (284 aa). Disordered stretches follow at residues 379–412, 429–474, and 492–511; these read SDDRLETQSLPSRSPPGTPNHRNSSFTQEATRVR, SEDF…KKNS, and NESFDVPSSPEKSTPNGGIP. 2 stretches are compositionally biased toward polar residues: residues 398 to 408 and 432 to 455; these read NHRNSSFTQEA and FVSQRSPSSTQANSIVLESSPSQE. S474 is subject to Phosphoserine. One can recognise a PDZ domain in the interval 517–589; sequence LIKMKPDENG…DQVVLFIKAS (73 aa). One can recognise a Tyrosine-protein phosphatase domain in the interval 655–911; it reads VLAQFDQLYR…RFVCEAILKV (257 aa). Residues D820, 852–858, and Q896 each bind substrate; that span reads CSAGIGR. Catalysis depends on C852, which acts as the Phosphocysteine intermediate.

This sequence belongs to the protein-tyrosine phosphatase family. Non-receptor class subfamily. Highly expressed in testis. Specifically expressed in spermatocytes and spermatids within seminiferous tubules (at protein level).

Its subcellular location is the cell membrane. It localises to the cytoplasm. It is found in the cytoskeleton. The enzyme catalyses O-phospho-L-tyrosyl-[protein] + H2O = L-tyrosyl-[protein] + phosphate. Phosphatase that plays a role in immunity, learning, synaptic plasticity or cell homeostasis. Regulates neuronal cell homeostasis by protecting neurons against apoptosis. Negatively regulates TLR4-induced interferon beta production by dephosphorylating adapter TICAM2 and inhibiting subsequent TRAM-TRIF interaction. Dephosphorylates also the immunoreceptor tyrosine-based activation motifs/ITAMs of the TCR zeta subunit and thereby negatively regulates TCR-mediated signaling pathway. May act at junctions between the membrane and the cytoskeleton. The chain is Tyrosine-protein phosphatase non-receptor type 4 (Ptpn4) from Mus musculus (Mouse).